The primary structure comprises 120 residues: Ragulator complex protein LAMTOR4 homolog (120 aa).

Residues 93 to 120 (QNGVTTTTSSSSSNSVYNDASDSGAVLA) form a disordered region. The segment covering 97 to 107 (TTTTSSSSSNS) has biased composition (low complexity).

It belongs to the LAMTOR4 family. As to quaternary structure, part of the Ragulator complex composed of Lamtor3, Lamtor2, CG14184, CG14812, and Lamtor4.

The protein resides in the lysosome. Its function is as follows. Regulator of the TOR pathway, a signaling cascade that promotes cell growth in response to growth factors, energy levels, and amino acids. As part of the Ragulator complex, may activate the TOR signaling cascade in response to amino acids. This chain is Ragulator complex protein LAMTOR4 homolog, found in Drosophila melanogaster (Fruit fly).